We begin with the raw amino-acid sequence, 421 residues long: Gamma-glutamyl phosphate reductase (421 aa).

It belongs to the gamma-glutamyl phosphate reductase family.

The protein localises to the cytoplasm. The catalysed reaction is L-glutamate 5-semialdehyde + phosphate + NADP(+) = L-glutamyl 5-phosphate + NADPH + H(+). It participates in amino-acid biosynthesis; L-proline biosynthesis; L-glutamate 5-semialdehyde from L-glutamate: step 2/2. In terms of biological role, catalyzes the NADPH-dependent reduction of L-glutamate 5-phosphate into L-glutamate 5-semialdehyde and phosphate. The product spontaneously undergoes cyclization to form 1-pyrroline-5-carboxylate. The protein is Gamma-glutamyl phosphate reductase of Bordetella petrii (strain ATCC BAA-461 / DSM 12804 / CCUG 43448).